We begin with the raw amino-acid sequence, 302 residues long: Sulfate adenylyltransferase subunit 2 (302 aa).

Belongs to the PAPS reductase family. CysD subfamily. In terms of assembly, heterodimer composed of CysD, the smaller subunit, and CysN.

The catalysed reaction is sulfate + ATP + H(+) = adenosine 5'-phosphosulfate + diphosphate. Its pathway is sulfur metabolism; hydrogen sulfide biosynthesis; sulfite from sulfate: step 1/3. Functionally, with CysN forms the ATP sulfurylase (ATPS) that catalyzes the adenylation of sulfate producing adenosine 5'-phosphosulfate (APS) and diphosphate, the first enzymatic step in sulfur assimilation pathway. APS synthesis involves the formation of a high-energy phosphoric-sulfuric acid anhydride bond driven by GTP hydrolysis by CysN coupled to ATP hydrolysis by CysD. This chain is Sulfate adenylyltransferase subunit 2, found in Escherichia coli O7:K1 (strain IAI39 / ExPEC).